The primary structure comprises 627 residues: 1-deoxy-D-xylulose-5-phosphate synthase (627 aa).

Thiamine diphosphate contacts are provided by residues H80 and 121–123; that span reads GHS. A Mg(2+)-binding site is contributed by D152. Thiamine diphosphate contacts are provided by residues 153 to 154, N181, Y288, and E370; that span reads GA. N181 is a binding site for Mg(2+).

It belongs to the transketolase family. DXPS subfamily. Homodimer. Mg(2+) serves as cofactor. The cofactor is thiamine diphosphate.

The catalysed reaction is D-glyceraldehyde 3-phosphate + pyruvate + H(+) = 1-deoxy-D-xylulose 5-phosphate + CO2. It functions in the pathway metabolic intermediate biosynthesis; 1-deoxy-D-xylulose 5-phosphate biosynthesis; 1-deoxy-D-xylulose 5-phosphate from D-glyceraldehyde 3-phosphate and pyruvate: step 1/1. Functionally, catalyzes the acyloin condensation reaction between C atoms 2 and 3 of pyruvate and glyceraldehyde 3-phosphate to yield 1-deoxy-D-xylulose-5-phosphate (DXP). The polypeptide is 1-deoxy-D-xylulose-5-phosphate synthase (Aliivibrio fischeri (strain ATCC 700601 / ES114) (Vibrio fischeri)).